A 257-amino-acid chain; its full sequence is Auxin-responsive protein IAA17 (257 aa).

Disordered regions lie at residues 1-51 (MSPP…PAAT) and 85-119 (GKKAAAGEEDEDAEEEDKKVAAAPQAPAAKAQVVG). The EAR-like (transcriptional repression) signature appears at 33–37 (LRLGL). Low complexity predominate over residues 105–118 (AAAPQAPAAKAQVV). A PB1 domain is found at 151-239 (FLYVKVSMDG…SCRRLRIMKG (89 aa)).

The protein belongs to the Aux/IAA family. Homodimers and heterodimers. Highly expressed in etiolated seedlings and flowers. Expressed in roots and green seedlings.

Its subcellular location is the nucleus. Aux/IAA proteins are short-lived transcriptional factors that function as repressors of early auxin response genes at low auxin concentrations. The chain is Auxin-responsive protein IAA17 (IAA17) from Oryza sativa subsp. japonica (Rice).